The following is a 741-amino-acid chain: MEKMHSKSVSPVPFNNSNNTSLGGLRKSSSIPTLAVPECESMGNKHIEEERTNNITTMAMKRRLLDPQNKKKQNRFERYSSSNHAQEQSSEENFCRSKKDSTVLKFGIDSILKNKNAEKVPKGISNAGRIQDERFTEACTNTSSNVNPLSKYFKPSSNDQLGARRTATSFSSSSEASDSKSCCTNNNEEARYKYRVIDKRKSADSDWSEDATGNEADDPDDHINQDNCDLASTLEQSRIVALEILKNKRLRLDSSEALNDLTPYDQLSRTEDQQISRRVEMMNHQAFARENNEWPRSFSSGLQDPFAKNLPNAFLPFYMQPYLRAYYNIQKYIYHKKLLNRNDRFYREANVENDNYKTEESLRSPSETKQYSPDASTFYPIRTEDSNGSRNLKVDVEEGDKEANKLFKDLCVSVGDRLSNALSYGRKDYNGLSTSQTSGNRFLNFSDKGIQAGSYYQTGERNDSLAGPLKNSGMSFDFPPKFGSNNSSTDKPEQEDNNPQTIGSEYQINTQRSMKDNLLTAKLLENEAKLRYGNIVTQYPRPFSWPFAASVRKSYDPALRSYFSRFNNSDAPHYGAAQVNPTAGNNFKSMLPGNFENPYFFNELNTLDTTGFLSRQYGHMSSSQNPHSETQNRSEEVRGTVKKRRKWNRAVFSLMQRRGLEKSFQSQKYVAKPERRKLADALSLTDAQVKIWFQNRRMKWRQEIKMKNRGLVPVHILGQDHEIEKEKTQTPSDEGEVINVD.

Disordered stretches follow at residues 1 to 30 (MEKM…KSSS), 61 to 96 (KRRL…NFCR), 146 to 183 (VNPL…KSCC), 203 to 226 (ADSD…INQD), 357 to 383 (KTEE…PIRT), 476 to 501 (FDFP…NPQT), and 616 to 642 (QYGH…GTVK). Residues 7–19 (KSVSPVPFNNSNN) are compositionally biased toward low complexity. Residues 63-78 (RLLDPQNKKKQNRFER) show a composition bias toward basic and acidic residues. Over residues 79 to 92 (YSSSNHAQEQSSEE) the composition is skewed to polar residues. Residues 169–181 (SFSSSSEASDSKS) show a composition bias toward low complexity. A compositionally biased stretch (polar residues) spans 363-375 (RSPSETKQYSPDA). The segment covering 616–629 (QYGHMSSSQNPHSE) has biased composition (polar residues). The span at 630–639 (TQNRSEEVRG) shows a compositional bias: basic and acidic residues. The segment at residues 645–704 (RKWNRAVFSLMQRRGLEKSFQSQKYVAKPERRKLADALSLTDAQVKIWFQNRRMKWRQEI) is a DNA-binding region (homeobox). The tract at residues 722 to 741 (EIEKEKTQTPSDEGEVINVD) is disordered.

Belongs to the H2.0 homeobox family. As to expression, expressed in the tissues of endodermal origin.

The protein localises to the nucleus. The polypeptide is Homeobox protein AHox1 (AHOX1) (Halocynthia roretzi (Sea squirt)).